Here is a 182-residue protein sequence, read N- to C-terminus: Crossover junction endodeoxyribonuclease RuvC (182 aa).

Catalysis depends on residues D7, E69, and D141. The Mg(2+) site is built by D7, E69, and D141.

The protein belongs to the RuvC family. In terms of assembly, homodimer which binds Holliday junction (HJ) DNA. The HJ becomes 2-fold symmetrical on binding to RuvC with unstacked arms; it has a different conformation from HJ DNA in complex with RuvA. In the full resolvosome a probable DNA-RuvA(4)-RuvB(12)-RuvC(2) complex forms which resolves the HJ. Requires Mg(2+) as cofactor.

It localises to the cytoplasm. The enzyme catalyses Endonucleolytic cleavage at a junction such as a reciprocal single-stranded crossover between two homologous DNA duplexes (Holliday junction).. In terms of biological role, the RuvA-RuvB-RuvC complex processes Holliday junction (HJ) DNA during genetic recombination and DNA repair. Endonuclease that resolves HJ intermediates. Cleaves cruciform DNA by making single-stranded nicks across the HJ at symmetrical positions within the homologous arms, yielding a 5'-phosphate and a 3'-hydroxyl group; requires a central core of homology in the junction. The consensus cleavage sequence is 5'-(A/T)TT(C/G)-3'. Cleavage occurs on the 3'-side of the TT dinucleotide at the point of strand exchange. HJ branch migration catalyzed by RuvA-RuvB allows RuvC to scan DNA until it finds its consensus sequence, where it cleaves and resolves the cruciform DNA. This Delftia acidovorans (strain DSM 14801 / SPH-1) protein is Crossover junction endodeoxyribonuclease RuvC.